The primary structure comprises 183 residues: Putative 3-methyladenine DNA glycosylase (183 aa).

This sequence belongs to the DNA glycosylase MPG family.

The protein is Putative 3-methyladenine DNA glycosylase of Legionella pneumophila subsp. pneumophila (strain Philadelphia 1 / ATCC 33152 / DSM 7513).